The primary structure comprises 184 residues: ATP synthase subunit b, chloroplastic (184 aa).

The chain crosses the membrane as a helical span at residues 31–49; that stretch reads IINPSVVLSVLIYFGKGVL.

This sequence belongs to the ATPase B chain family. As to quaternary structure, F-type ATPases have 2 components, F(1) - the catalytic core - and F(0) - the membrane proton channel. F(1) has five subunits: alpha(3), beta(3), gamma(1), delta(1), epsilon(1). F(0) has four main subunits: a(1), b(1), b'(1) and c(10-14). The alpha and beta chains form an alternating ring which encloses part of the gamma chain. F(1) is attached to F(0) by a central stalk formed by the gamma and epsilon chains, while a peripheral stalk is formed by the delta, b and b' chains.

The protein resides in the plastid. It is found in the chloroplast thylakoid membrane. F(1)F(0) ATP synthase produces ATP from ADP in the presence of a proton or sodium gradient. F-type ATPases consist of two structural domains, F(1) containing the extramembraneous catalytic core and F(0) containing the membrane proton channel, linked together by a central stalk and a peripheral stalk. During catalysis, ATP synthesis in the catalytic domain of F(1) is coupled via a rotary mechanism of the central stalk subunits to proton translocation. In terms of biological role, component of the F(0) channel, it forms part of the peripheral stalk, linking F(1) to F(0). The protein is ATP synthase subunit b, chloroplastic of Pinus koraiensis (Korean pine).